Reading from the N-terminus, the 119-residue chain is UPF0102 protein Nmul_A0195 (119 aa).

Belongs to the UPF0102 family.

In Nitrosospira multiformis (strain ATCC 25196 / NCIMB 11849 / C 71), this protein is UPF0102 protein Nmul_A0195.